Consider the following 1153-residue polypeptide: ATP-dependent helicase/deoxyribonuclease subunit B (1153 aa).

A UvrD-like helicase ATP-binding domain is found at 1–289 (MELNAYIGRA…KHLEQNFNAL (289 aa)). Position 8-15 (8-15 (GRAGTGKS)) interacts with ATP. The region spanning 269–583 (LDVQRFIHND…SIGTMDLAKV (315 aa)) is the UvrD-like helicase C-terminal domain. C784, C1110, C1113, and C1119 together coordinate [4Fe-4S] cluster.

It belongs to the helicase family. AddB/RexB type 1 subfamily. Heterodimer of AddA and AddB. Mg(2+) serves as cofactor. [4Fe-4S] cluster is required as a cofactor.

In terms of biological role, the heterodimer acts as both an ATP-dependent DNA helicase and an ATP-dependent, dual-direction single-stranded exonuclease. Recognizes the chi site generating a DNA molecule suitable for the initiation of homologous recombination. The AddB subunit has 5' -&gt; 3' nuclease activity but not helicase activity. This Staphylococcus saprophyticus subsp. saprophyticus (strain ATCC 15305 / DSM 20229 / NCIMB 8711 / NCTC 7292 / S-41) protein is ATP-dependent helicase/deoxyribonuclease subunit B.